A 342-amino-acid polypeptide reads, in one-letter code: Heat-inducible transcription repressor HrcA (342 aa).

It belongs to the HrcA family.

In terms of biological role, negative regulator of class I heat shock genes (grpE-dnaK-dnaJ and groELS operons). Prevents heat-shock induction of these operons. This is Heat-inducible transcription repressor HrcA from Onion yellows phytoplasma (strain OY-M).